A 257-amino-acid polypeptide reads, in one-letter code: Beta-fibrinogenase mucrofibrase-3 (257 aa).

The signal sequence occupies residues 1–18; it reads MVLIRVLANLLILQLSYA. Positions 19-24 are excised as a propeptide; that stretch reads QKSSEL. The Peptidase S1 domain maps to 25–248; sequence VIGGDECNIN…HLDWIKGIIA (224 aa). Disulfide bonds link C31-C162, C49-C65, C97-C255, C141-C209, C173-C188, and C199-C224. Catalysis depends on charge relay system residues H64 and D109. S203 serves as the catalytic Charge relay system.

It belongs to the peptidase S1 family. Snake venom subfamily. Monomer. As to expression, expressed by the venom gland.

The protein resides in the secreted. Functionally, snake venom serine protease with fibrinogenolytic activities. Cleaves beta-chain of fibrinogen (FGB) efficiently and shows relatively lower activity on alpha-chain. The polypeptide is Beta-fibrinogenase mucrofibrase-3 (Protobothrops mucrosquamatus (Taiwan habu)).